The following is a 266-amino-acid chain: Glucosamine-6-phosphate deaminase (266 aa).

The Proton acceptor; for enolization step role is filled by aspartate 72. Aspartate 141 serves as the catalytic For ring-opening step. Histidine 143 (proton acceptor; for ring-opening step) is an active-site residue. The active-site For ring-opening step is the glutamate 148.

It belongs to the glucosamine/galactosamine-6-phosphate isomerase family. NagB subfamily. As to quaternary structure, homohexamer.

It carries out the reaction alpha-D-glucosamine 6-phosphate + H2O = beta-D-fructose 6-phosphate + NH4(+). The protein operates within amino-sugar metabolism; N-acetylneuraminate degradation; D-fructose 6-phosphate from N-acetylneuraminate: step 5/5. Its activity is regulated as follows. Allosterically activated by N-acetylglucosamine 6-phosphate (GlcNAc6P). Functionally, catalyzes the reversible isomerization-deamination of glucosamine 6-phosphate (GlcN6P) to form fructose 6-phosphate (Fru6P) and ammonium ion. In Tolumonas auensis (strain DSM 9187 / NBRC 110442 / TA 4), this protein is Glucosamine-6-phosphate deaminase.